The primary structure comprises 459 residues: tRNA modification GTPase MnmE (459 aa).

3 residues coordinate (6S)-5-formyl-5,6,7,8-tetrahydrofolate: Arg-20, Glu-85, and Arg-124. Positions 221 to 380 (GLSTVIIGRP…LEEAIQSLFY (160 aa)) constitute a TrmE-type G domain. Asn-231 serves as a coordination point for K(+). Residues 231–236 (NVGKSS), 250–256 (TDIPGTT), and 275–278 (DTAG) contribute to the GTP site. Ser-235 is a Mg(2+) binding site. Thr-250, Ile-252, and Thr-255 together coordinate K(+). Residue Thr-256 coordinates Mg(2+). Position 459 (Lys-459) interacts with (6S)-5-formyl-5,6,7,8-tetrahydrofolate.

Belongs to the TRAFAC class TrmE-Era-EngA-EngB-Septin-like GTPase superfamily. TrmE GTPase family. In terms of assembly, homodimer. Heterotetramer of two MnmE and two MnmG subunits. It depends on K(+) as a cofactor.

Its subcellular location is the cytoplasm. Exhibits a very high intrinsic GTPase hydrolysis rate. Involved in the addition of a carboxymethylaminomethyl (cmnm) group at the wobble position (U34) of certain tRNAs, forming tRNA-cmnm(5)s(2)U34. The chain is tRNA modification GTPase MnmE from Bacillus subtilis (strain 168).